Here is a 648-residue protein sequence, read N- to C-terminus: PTS system N-acetylglucosamine-specific EIICBA component (648 aa).

N-formylmethionine is present on Met1. The PTS EIIC type-1 domain occupies 1–371; that stretch reads MNILGFFQRL…FNLKTPGRED (371 aa). 12 consecutive transmembrane segments (helical) span residues 16 to 36, 38 to 58, 70 to 90, 92 to 112, 132 to 152, 159 to 179, 192 to 212, 232 to 252, 260 to 280, 282 to 302, 303 to 323, and 339 to 359; these read LPIA…PDLL, VAFI…IFAI, GAAA…MVTI, PEIN…GAAY, FVPI…GYVW, IHAG…IFGF, VLNT…GTVF, GFFP…YFAA, VGGM…TEPL, FLFM…TGIS, LFVA…GAID, and MLLV…SLVI. The 83-residue stretch at 390-472 folds into the PTS EIIB type-1 domain; sequence TQLATNYIAA…KKVVARGPVA (83 aa). The Phosphocysteine intermediate; for EIIB activity role is filled by Cys412. At Cys412 the chain carries Phosphocysteine; by EIIA. In terms of domain architecture, PTS EIIA type-1 spans 517 to 621; the sequence is DEAFASKAVG…SMISPVVCSN (105 aa). His554 and His569 together coordinate Zn(2+). The active-site Tele-phosphohistidine intermediate; for EIIA activity is His569. His569 is modified (phosphohistidine; by HPr).

Zn(2+) serves as cofactor. In terms of processing, 60% of isolated protein was N-formylated.

It localises to the cell inner membrane. It catalyses the reaction N(pros)-phospho-L-histidyl-[protein] + N-acetyl-D-glucosamine(out) = N-acetyl-D-glucosamine 6-phosphate(in) + L-histidyl-[protein]. Its activity is regulated as follows. P-chloromercuribenzoate inhibits the accumulation of both N-acetyl-D-glucosamine and antibiotic streptozotocin (2-deoxy-2-(3-methyl-3-nitrosoureido)-D-glucopyranose). N-acetyl-D-glucosamine is a competitive inhibitor for the uptake of streptozotocin. Functionally, the phosphoenolpyruvate-dependent sugar phosphotransferase system (sugar PTS), a major carbohydrate active transport system, catalyzes the phosphorylation of incoming sugar substrates concomitantly with their translocation across the cell membrane. This system is involved in N-acetylglucosamine transport. It can also transport and phosphorylate the antibiotic streptozotocin. Could play a significant role in the recycling of peptidoglycan. This chain is PTS system N-acetylglucosamine-specific EIICBA component, found in Escherichia coli (strain K12).